Here is a 307-residue protein sequence, read N- to C-terminus: Pantothenate kinase (307 aa).

90–97 contacts ATP; that stretch reads GSVAVGKS.

The protein belongs to the prokaryotic pantothenate kinase family.

It localises to the cytoplasm. It catalyses the reaction (R)-pantothenate + ATP = (R)-4'-phosphopantothenate + ADP + H(+). It functions in the pathway cofactor biosynthesis; coenzyme A biosynthesis; CoA from (R)-pantothenate: step 1/5. The chain is Pantothenate kinase from Limosilactobacillus reuteri subsp. reuteri (strain JCM 1112) (Lactobacillus reuteri).